The sequence spans 197 residues: Probable molybdenum cofactor guanylyltransferase (197 aa).

GTP is bound by residues 12–14 (LAG), K24, D71, and D103. D103 is a binding site for Mg(2+).

This sequence belongs to the MobA family. It depends on Mg(2+) as a cofactor.

It is found in the cytoplasm. It catalyses the reaction Mo-molybdopterin + GTP + H(+) = Mo-molybdopterin guanine dinucleotide + diphosphate. In terms of biological role, transfers a GMP moiety from GTP to Mo-molybdopterin (Mo-MPT) cofactor (Moco or molybdenum cofactor) to form Mo-molybdopterin guanine dinucleotide (Mo-MGD) cofactor. The polypeptide is Probable molybdenum cofactor guanylyltransferase (Mycolicibacterium paratuberculosis (strain ATCC BAA-968 / K-10) (Mycobacterium paratuberculosis)).